The sequence spans 147 residues: Protein phosphatase 1 regulatory subunit 14B (147 aa).

The segment covering 1–15 (MADSGPAGGAALAAP) has biased composition (low complexity). Residues 1-55 (MADSGPAGGAALAAPAPGPGSGSTGPRVYFQSPPGAAGEGPGGADDDGPVRRQGK) are disordered. Position 2 is an N-acetylalanine (alanine 2). Serine 21 carries the post-translational modification Phosphoserine. Tyrosine 29 is modified (phosphotyrosine). Position 32 is a phosphoserine (serine 32). Threonine 57 bears the Phosphothreonine mark. Residues 61-103 (DRKELRKRLNLEEWILEQLTRLYDCQEEEIPELEIDVDELLDM) adopt a coiled-coil conformation.

The protein belongs to the PP1 inhibitor family. Post-translationally, phosphorylated primarily on Thr-57 by PKC (in vitro). An unknown Ser is also phosphorylated by PKC (in vitro). Ubiquitous. Highly expressed in testis. Detected at low levels in the other tissues tested. Highly expressed in cardiac muscle, bladder and aorta (at protein level).

The protein resides in the cytoplasm. Functionally, inhibitor of PPP1CA. Has over 50-fold higher inhibitory activity when phosphorylated. This is Protein phosphatase 1 regulatory subunit 14B (Ppp1r14b) from Mus musculus (Mouse).